The sequence spans 165 residues: 3-hydroxyacyl-[acyl-carrier-protein] dehydratase FERN, mitochondrial (165 aa).

The transit peptide at 1–35 (MLMKRLFSSSHVFSSSSASSNLLKIGSVLKQARTF) directs the protein to the mitochondrion. The region spanning 36-124 (ADDDVLGYSK…AVSIRQIKNK (89 aa)) is the MaoC-like domain.

Homodimer.

The protein localises to the mitochondrion. The catalysed reaction is a (3R)-hydroxyacyl-[ACP] = a (2E)-enoyl-[ACP] + H2O. It functions in the pathway lipid metabolism; fatty acid biosynthesis. In terms of biological role, 3-hydroxyl-[acyl-carrier-protein] (3-hydroxyl-ACP) dehydratase required for mitochondrial fatty acid synthesis (mtFAS). Essential for photorespiration, tomato morphogenesis and plant development, probably by influencing mitochondrial membrane lipid composition and other lipid metabolic pathways, and by contributing to energy supply and reactive oxygen species (ROS) homeostasis. This Solanum lycopersicum (Tomato) protein is 3-hydroxyacyl-[acyl-carrier-protein] dehydratase FERN, mitochondrial.